A 137-amino-acid polypeptide reads, in one-letter code: Histone H2B.4 (137 aa).

Residues 1–37 are compositionally biased toward basic and acidic residues; the sequence is MAPKAEKKPAEKKPTEEKAEKKPRAEKRVPGKEGGEK. The interval 1–45 is disordered; it reads MAPKAEKKPAEKKPTEEKAEKKPRAEKRVPGKEGGEKKGKKKAKK. Residues K7 and K27 each carry the N6-acetyllysine modification. Residue K133 forms a Glycyl lysine isopeptide (Lys-Gly) (interchain with G-Cter in ubiquitin) linkage.

The protein belongs to the histone H2B family. As to quaternary structure, the nucleosome is a histone octamer containing two molecules each of H2A, H2B, H3 and H4 assembled in one H3-H4 heterotetramer and two H2A-H2B heterodimers. The octamer wraps approximately 147 bp of DNA. In terms of processing, can be acetylated to form H2BK6ac and H2BK33ac. Post-translationally, monoubiquitinated to form H2BK143ub1; may give a specific tag for epigenetic transcriptional activation.

It is found in the nucleus. The protein localises to the chromosome. Its function is as follows. Core component of nucleosome. Nucleosomes wrap and compact DNA into chromatin, limiting DNA accessibility to the cellular machineries which require DNA as a template. Histones thereby play a central role in transcription regulation, DNA repair, DNA replication and chromosomal stability. DNA accessibility is regulated via a complex set of post-translational modifications of histones, also called histone code, and nucleosome remodeling. The protein is Histone H2B.4 of Zea mays (Maize).